A 247-amino-acid polypeptide reads, in one-letter code: 5'-nucleotidase SurE (247 aa).

4 residues coordinate a divalent metal cation: D8, D9, S39, and N91.

This sequence belongs to the SurE nucleotidase family. The cofactor is a divalent metal cation.

The protein localises to the cytoplasm. It carries out the reaction a ribonucleoside 5'-phosphate + H2O = a ribonucleoside + phosphate. In terms of biological role, nucleotidase that shows phosphatase activity on nucleoside 5'-monophosphates. In Methylobacillus flagellatus (strain ATCC 51484 / DSM 6875 / VKM B-1610 / KT), this protein is 5'-nucleotidase SurE.